Consider the following 192-residue polypeptide: Interleukin-18 (192 aa).

The propeptide occupies 1–35 (MAAEPVEDNCISFVEMKFINNTLYFVAENGDLESD).

The protein belongs to the IL-1 family. In terms of assembly, forms a ternary complex with ligand-binding receptor subunit IL18R1 and signaling receptor subunit IL18RAP at the plasma membrane. Mature IL18 first binds to IL18R1 forming a low affinity binary complex, which then interacts with IL18RAP to form a high affinity ternary complex that signals inside the cell. Interacts with cargo receptor TMED10; the interaction mediates the translocation from the cytoplasm into the ERGIC (endoplasmic reticulum-Golgi intermediate compartment) and thereby secretion. Post-translationally, the pro-IL-18 precursor is processed by CASP1, CASP4 or CASP5 to yield its mature, active form. The pro-IL-18 precursor features autoinhibitory interactions between the propeptide and the post-cleavage-site region, preventing recognition by the IL18R1 receptor. Processing by CASP1, CASP4 or CASP5 induces conformational changes to generate critical receptor-binding sites. The mature form is then secreted and released in the extracellular milieu by passing through the gasdermin-D (GSDMD) pore. In contrast, cleavage by CASP3 inactivates IL18.

The protein localises to the cytoplasm. It is found in the cytosol. Its subcellular location is the secreted. Its function is as follows. Pro-inflammatory cytokine primarily involved in epithelial barrier repair, polarized T-helper 1 (Th1) cell and natural killer (NK) cell immune responses. Upon binding to IL18R1 and IL18RAP, forms a signaling ternary complex which activates NF-kappa-B, triggering synthesis of inflammatory mediators. Synergizes with IL12/interleukin-12 to induce IFNG synthesis from T-helper 1 (Th1) cells and natural killer (NK) cells. Involved in transduction of inflammation downstream of pyroptosis: its mature form is specifically released in the extracellular milieu by passing through the gasdermin-D (GSDMD) pore. The polypeptide is Interleukin-18 (IL18) (Capra hircus (Goat)).